The sequence spans 1955 residues: Callose synthase 3 (1955 aa).

Over 1-488 (MSATRGGPDQ…FWHVFRSFDR (488 aa)) the chain is Cytoplasmic. A helical transmembrane segment spans residues 489 to 509 (MWSFYILCLQAMIIMAWDGGQ). Topologically, residues 510–521 (PSSVFGADVFKK) are extracellular. A helical membrane pass occupies residues 522–542 (VLSVFITAAIMKLGQAVLDVI). The Cytoplasmic segment spans residues 543–558 (LNFKAHQSMTLHVKLR). A helical membrane pass occupies residues 559–579 (YILKVFSAAAWVIILPVTYAY). The Extracellular segment spans residues 580–604 (SWKDPPAFARTIKSWFGSAMHSPSL). The helical transmembrane segment at 605–625 (FIIAVVSYLSPNMLAGVMFLF) threads the bilayer. The Cytoplasmic portion of the chain corresponds to 626-660 (PLLRRFLERSNYRIVMLMMWWSQPRLYVGRGMHES). Residues 661-681 (AFSLFKYTMFWVLLIATKLAF) form a helical membrane-spanning segment. Residues 682 to 717 (SYYIEIRPLVAPTQAIMKARVTNFQWHEFFPRAKNN) lie on the Extracellular side of the membrane. The chain crosses the membrane as a helical span at residues 718 to 738 (IGVVIALWAPIILVYFMDSQI). The Cytoplasmic segment spans residues 739–1517 (WYAIFSTLFG…FDFFRMMSCY (779 aa)). Residues 1518-1538 (FTTVGFYFSTLITVLTVYIFL) form a helical membrane-spanning segment. Residues 1539 to 1566 (YGRLYLVLSGLEQGLSTQKGIRDNTPLQ) are Extracellular-facing. A helical transmembrane segment spans residues 1567-1587 (IALASQSFVQIGFLMALPMLM). The Cytoplasmic segment spans residues 1588–1597 (EIGLERGFRT). A helical transmembrane segment spans residues 1598 to 1618 (ALSEFVLMQLQLAPVFFTFSL). Residues 1619-1661 (GTKTHYYGRTLLHGGAKYRSTGRGFVVFHAKFADNYRLYSRSH) lie on the Extracellular side of the membrane. The chain crosses the membrane as a helical span at residues 1662 to 1682 (FVKGLEMMLLLVVYQIFGSAY). The Cytoplasmic segment spans residues 1683–1688 (RGVLAY). A helical transmembrane segment spans residues 1689–1709 (LLITISMWFMVGTWLFAPFLF). The Extracellular segment spans residues 1710–1761 (NPSGFEWQKIVDDWTDWNKWINNIGGIGVPAEKSWESWWEEEQEHLRYSGKR). The helical transmembrane segment at 1762 to 1782 (GIVVEILLALRFFIYQYGLVY) threads the bilayer. Residues 1783 to 1792 (HLTITEKTKN) are Cytoplasmic-facing. The chain crosses the membrane as a helical span at residues 1793-1813 (FLVYGVSWLVIFLILFVMKTV). Residues 1814–1833 (SVGRRRFSASFQLMFRLIKG) are Extracellular-facing. Residues 1834-1854 (LIFMTFIAIIVILITLAHMTI) form a helical membrane-spanning segment. Residues 1855–1856 (QD) lie on the Cytoplasmic side of the membrane. The helical transmembrane segment at 1857–1877 (IIVCILAFMPTGWGMLLIAQA) threads the bilayer. The Extracellular portion of the chain corresponds to 1878-1899 (CKPVVHRAGFWGSVRTLARGYE). The chain crosses the membrane as a helical span at residues 1900 to 1920 (IVMGLLLFTPVAFLAWFPFVS). Topologically, residues 1921–1955 (EFQTRMLFNQAFSRGLQISRILGGHRKDRSSRNKE) are cytoplasmic.

The protein belongs to the glycosyltransferase 48 family.

The protein resides in the cell membrane. The catalysed reaction is [(1-&gt;3)-beta-D-glucosyl](n) + UDP-alpha-D-glucose = [(1-&gt;3)-beta-D-glucosyl](n+1) + UDP + H(+). In terms of biological role, involved in callose synthesis at the forming cell plate during cytokinesis. During plant growth and development, callose is found as a transitory component of the cell plate in dividing cells, is a major component of pollen mother cell walls and pollen tubes, and is found as a structural component of plasmodesmatal canals. The polypeptide is Callose synthase 3 (CALS3) (Arabidopsis thaliana (Mouse-ear cress)).